Here is a 599-residue protein sequence, read N- to C-terminus: Putative sensor histidine kinase NtrY-like (599 aa).

Transmembrane regions (helical) follow at residues 17 to 37 (ILIL…FYVI), 44 to 64 (FSTI…LGIL), 85 to 105 (IVIA…VFSV), and 285 to 305 (IMFI…GVLF). In terms of domain architecture, HAMP spans 307 to 361 (AKIVKPIKKLVTATDKVKDGDLTVQVPENEVDKDEIGTLYAAFNRMIKQLSRQQR). In terms of domain architecture, Histidine kinase spans 378 to 589 (KVAHEIKNPL…IIDIKFDLKE (212 aa)). A Phosphohistidine; by autocatalysis modification is found at His381.

The protein resides in the cell membrane. The catalysed reaction is ATP + protein L-histidine = ADP + protein N-phospho-L-histidine.. Functionally, member of the two-component regulatory system RP614/RP562. In Rickettsia prowazekii (strain Madrid E), this protein is Putative sensor histidine kinase NtrY-like.